The sequence spans 887 residues: Phosphatidylinositol 3-kinase catalytic subunit type 3 (887 aa).

Residues 35-184 (YKAVLEDPML…LAKLTKAHRQ (150 aa)) form the C2 PI3K-type domain. A disordered region spans residues 150 to 170 (EADGSEPTKTPGRTSSTLSED). Polar residues predominate over residues 156–170 (PTKTPGRTSSTLSED). Phosphothreonine; by AMPK is present on Thr163. The residue at position 165 (Ser165) is a Phosphoserine; by AMPK. Residues Ser244, Ser261, and Ser282 each carry the phosphoserine modification. One can recognise a PIK helical domain in the interval 282–520 (SDHGLKPNAA…PKTHEMYLNV (239 aa)). Disordered regions lie at residues 416–435 (EPTKKESQGSVSESVSNSGI) and 446–468 (ITSPLPPVSSPPPASKTKESSDG). The span at 423-435 (QGSVSESVSNSGI) shows a compositional bias: low complexity. Pro residues predominate over residues 449 to 459 (PLPPVSSPPPA). Residues 605–871 (IPETATLFKS…LIDESVHALF (267 aa)) enclose the PI3K/PI4K catalytic domain. Residues 611 to 617 (LFKSALM) form a G-loop region. The catalytic loop stretch occupies residues 740–748 (GVGDRHLDN). The tract at residues 759–780 (HIDFGYILGRDPKPLPPPMKLN) is activation loop.

Belongs to the PI3/PI4-kinase family. As to quaternary structure, component of the PI3K (PI3KC3/PI3K-III/class III phosphatidylinositol 3-kinase) complex the core of which is composed of the catalytic subunit PIK3C3, the regulatory subunit PIK3R4 and BECN1 associating with additional regulatory/auxiliary subunits to form alternative complex forms. Alternative complex forms containing a fourth regulatory subunit in a mutually exclusive manner are: the PI3K complex I (PI3KC3-C1) containing ATG14, and the PI3K complex II (PI3KC3-C2) containing UVRAG. PI3KC3-C1 displays a V-shaped architecture with PIK3R4 serving as a bridge between PIK3C3 and the ATG14:BECN1 subcomplex. Both, PI3KC3-C1 and PI3KC3-C2, can associate with further regulatory subunits such as RUBCN, SH3GLB1/Bif-1 and AMBRA1. PI3KC3-C1 probably associates with PIK3CB. Interacts with RAB7A in the presence of PIK3R4. Interacts with AMBRA1. Interacts with BECN1P1/BECN2. Interacts with SLAMF1. May be a component of a complex composed of RAB5A (in GDP-bound form), DYN2 and PIK3C3. Interacts with NCKAP1L. Interacts with ATG14; this interaction is increased in the absence of TMEM39A. Interacts with STEEP1; the interaction is STING1-dependent and required for trafficking of STING1 from the endoplasmic reticulum. Interacts with YWHAG. Interacts with ARMC3. Mn(2+) is required as a cofactor. In terms of processing, ubiquitinated via 'Lys-29'- and 'Lys-48'-linked ubiquitination by UBE3C, promoting its degradation. Deubiquitination by ZRANB1/TRABID promotes its stabilization, leading to autophagosome maturation.

The protein localises to the midbody. Its subcellular location is the late endosome. The protein resides in the cytoplasmic vesicle. It localises to the autophagosome. It catalyses the reaction a 1,2-diacyl-sn-glycero-3-phospho-(1D-myo-inositol) + ATP = a 1,2-diacyl-sn-glycero-3-phospho-(1D-myo-inositol-3-phosphate) + ADP + H(+). Functionally, catalytic subunit of the PI3K complex that mediates formation of phosphatidylinositol 3-phosphate; different complex forms are believed to play a role in multiple membrane trafficking pathways: PI3KC3-C1 is involved in initiation of autophagosomes and PI3KC3-C2 in maturation of autophagosomes and endocytosis. As part of PI3KC3-C1, promotes endoplasmic reticulum membrane curvature formation prior to vesicle budding. Involved in regulation of degradative endocytic trafficking and required for the abscission step in cytokinesis, probably in the context of PI3KC3-C2. Involved in the transport of lysosomal enzyme precursors to lysosomes. Required for transport from early to late endosomes. This chain is Phosphatidylinositol 3-kinase catalytic subunit type 3, found in Sus scrofa (Pig).